The chain runs to 362 residues: Large ribosomal subunit protein uL3 (362 aa).

Residues 340–362 form a disordered region; that stretch reads RPPKKKPPVQRPQITYVSVESKQ. The segment covering 351-362 has biased composition (polar residues); sequence PQITYVSVESKQ.

Belongs to the universal ribosomal protein uL3 family. Part of the 50S ribosomal subunit. Forms a cluster with proteins L14 and L24e.

In terms of biological role, one of the primary rRNA binding proteins, it binds directly near the 3'-end of the 23S rRNA, where it nucleates assembly of the 50S subunit. The chain is Large ribosomal subunit protein uL3 from Pyrococcus horikoshii (strain ATCC 700860 / DSM 12428 / JCM 9974 / NBRC 100139 / OT-3).